We begin with the raw amino-acid sequence, 146 residues long: Transcriptional regulator MraZ (146 aa).

SpoVT-AbrB domains follow at residues 9-55 (ASAL…PRPA) and 81-124 (AMDV…DVQR).

Belongs to the MraZ family. As to quaternary structure, forms oligomers.

It is found in the cytoplasm. The protein localises to the nucleoid. The protein is Transcriptional regulator MraZ of Methylibium petroleiphilum (strain ATCC BAA-1232 / LMG 22953 / PM1).